Here is a 390-residue protein sequence, read N- to C-terminus: S-adenosylmethionine synthase 2 (390 aa).

Glutamate 9 lines the Mg(2+) pocket. ATP is bound at residue histidine 15. Glutamate 43 provides a ligand contact to K(+). L-methionine-binding residues include glutamate 56 and glutamine 99. ATP is bound by residues 167 to 169, 235 to 238, aspartate 246, 252 to 253, alanine 269, lysine 273, and lysine 277; these read DGK, SGRF, and RK. Aspartate 246 is an L-methionine binding site. Lysine 277 is an L-methionine binding site.

The protein belongs to the AdoMet synthase family. In terms of assembly, homotetramer. The cofactor is Mn(2+). Mg(2+) is required as a cofactor. Co(2+) serves as cofactor. It depends on K(+) as a cofactor.

It is found in the cytoplasm. It carries out the reaction L-methionine + ATP + H2O = S-adenosyl-L-methionine + phosphate + diphosphate. Its pathway is amino-acid biosynthesis; S-adenosyl-L-methionine biosynthesis; S-adenosyl-L-methionine from L-methionine: step 1/1. Functionally, catalyzes the formation of S-adenosylmethionine from methionine and ATP. The reaction comprises two steps that are both catalyzed by the same enzyme: formation of S-adenosylmethionine (AdoMet) and triphosphate, and subsequent hydrolysis of the triphosphate. This chain is S-adenosylmethionine synthase 2 (SAM2), found in Actinidia chinensis var. chinensis (Chinese soft-hair kiwi).